The chain runs to 149 residues: 3-hydroxyacyl-[acyl-carrier-protein] dehydratase FabZ (149 aa).

H49 is an active-site residue.

The protein belongs to the thioester dehydratase family. FabZ subfamily.

The protein localises to the cytoplasm. The enzyme catalyses a (3R)-hydroxyacyl-[ACP] = a (2E)-enoyl-[ACP] + H2O. Involved in unsaturated fatty acids biosynthesis. Catalyzes the dehydration of short chain beta-hydroxyacyl-ACPs and long chain saturated and unsaturated beta-hydroxyacyl-ACPs. The chain is 3-hydroxyacyl-[acyl-carrier-protein] dehydratase FabZ from Sulfurimonas denitrificans (strain ATCC 33889 / DSM 1251) (Thiomicrospira denitrificans (strain ATCC 33889 / DSM 1251)).